Consider the following 663-residue polypeptide: UvrABC system protein B (663 aa).

The Helicase ATP-binding domain maps to 31–271 (DNIEGGEKAQ…EQSISKIQAE (241 aa)). 44 to 51 (GATGTGKT) contacts ATP. Positions 97 to 120 (YYDYYQPEAYVPSSDTYIEKDSSV) match the Beta-hairpin motif. The Helicase C-terminal domain maps to 435 to 601 (QMDDLLGEIN…TIKKDIRDLI (167 aa)). The 36-residue stretch at 627–662 (QEAIKQLQKNMQEAAELLDFELAAQLRDLILELKAM) folds into the UVR domain.

It belongs to the UvrB family. In terms of assembly, forms a heterotetramer with UvrA during the search for lesions. Interacts with UvrC in an incision complex.

The protein resides in the cytoplasm. Its function is as follows. The UvrABC repair system catalyzes the recognition and processing of DNA lesions. A damage recognition complex composed of 2 UvrA and 2 UvrB subunits scans DNA for abnormalities. Upon binding of the UvrA(2)B(2) complex to a putative damaged site, the DNA wraps around one UvrB monomer. DNA wrap is dependent on ATP binding by UvrB and probably causes local melting of the DNA helix, facilitating insertion of UvrB beta-hairpin between the DNA strands. Then UvrB probes one DNA strand for the presence of a lesion. If a lesion is found the UvrA subunits dissociate and the UvrB-DNA preincision complex is formed. This complex is subsequently bound by UvrC and the second UvrB is released. If no lesion is found, the DNA wraps around the other UvrB subunit that will check the other stand for damage. This is UvrABC system protein B from Streptococcus equi subsp. equi (strain 4047).